The primary structure comprises 841 residues: Rhomboid-like protease 5 (841 aa).

Residues methionine 1–leucine 10 are compositionally biased toward low complexity. A disordered region spans residues methionine 1–serine 289. Positions glycine 11 to glutamate 51 are enriched in basic and acidic residues. Low complexity predominate over residues leucine 95–serine 132. Basic and acidic residues-rich tracts occupy residues leucine 154–glutamate 163, arginine 209–valine 230, and serine 243–aspartate 275. 6 helical membrane passes run phenylalanine 323–leucine 343, methionine 464–valine 484, tryptophan 492–valine 512, valine 526–isoleucine 546, phenylalanine 571–isoleucine 590, and phenylalanine 673–proline 693. The active-site Nucleophile is the serine 531. Residue histidine 585 is part of the active site.

The protein belongs to the peptidase S54 family.

The protein resides in the membrane. The enzyme catalyses Cleaves type-1 transmembrane domains using a catalytic dyad composed of serine and histidine that are contributed by different transmembrane domains.. In terms of biological role, serine protease involved in intramembrane proteolysis. Cleaves microneme adhesins, such as MIC2. This step is essential for efficient invasion of host cells. Catalyzes intramembrane proteolysis of AMA1. The protein is Rhomboid-like protease 5 (ROM5) of Toxoplasma gondii.